The sequence spans 59 residues: Large ribosomal subunit protein bL32 (59 aa).

The tract at residues 1 to 34 (MAVQKSKVTRSRRGQRRSHDALTGPTLSVDKTTG) is disordered. Residues 7-16 (KVTRSRRGQR) are compositionally biased toward basic residues.

The protein belongs to the bacterial ribosomal protein bL32 family.

The sequence is that of Large ribosomal subunit protein bL32 from Marinomonas sp. (strain MWYL1).